Reading from the N-terminus, the 188-residue chain is Elongation factor P (188 aa).

Lys34 is subject to N6-(3,6-diaminohexanoyl)-5-hydroxylysine.

Belongs to the elongation factor P family. May be beta-lysylated on the epsilon-amino group of Lys-34 by the combined action of EpmA and EpmB, and then hydroxylated on the C5 position of the same residue by EpmC (if this protein is present). Lysylation is critical for the stimulatory effect of EF-P on peptide-bond formation. The lysylation moiety may extend toward the peptidyltransferase center and stabilize the terminal 3-CCA end of the tRNA. Hydroxylation of the C5 position on Lys-34 may allow additional potential stabilizing hydrogen-bond interactions with the P-tRNA.

The protein localises to the cytoplasm. Its pathway is protein biosynthesis; polypeptide chain elongation. In terms of biological role, involved in peptide bond synthesis. Alleviates ribosome stalling that occurs when 3 or more consecutive Pro residues or the sequence PPG is present in a protein, possibly by augmenting the peptidyl transferase activity of the ribosome. Modification of Lys-34 is required for alleviation. The protein is Elongation factor P of Vibrio parahaemolyticus serotype O3:K6 (strain RIMD 2210633).